We begin with the raw amino-acid sequence, 85 residues long: LYR motif-containing protein 5A (85 aa).

It belongs to the complex I LYR family.

This Danio rerio (Zebrafish) protein is LYR motif-containing protein 5A (lyrm5a).